The following is a 142-amino-acid chain: Hemoglobin subunit alpha-A (142 aa).

The Globin domain maps to 2-142 (VLSAADKNNV…VGTVLTAKYR (141 aa)). Histidine 59 contacts O2. Histidine 88 provides a ligand contact to heme b.

It belongs to the globin family. As to quaternary structure, heterotetramer of two alpha chains and two beta chains. In terms of tissue distribution, red blood cells.

Involved in oxygen transport from the lung to the various peripheral tissues. The chain is Hemoglobin subunit alpha-A (HBAA) from Meleagris gallopavo (Wild turkey).